The chain runs to 550 residues: Amino acid transporter AVT1C (550 aa).

Polar residues predominate over residues 1 to 11 (MNHVPSDQSFY). 2 disordered regions span residues 1–44 (MNHV…ENQA) and 128–148 (QGLLSPIPSRRGSMRKDEKSS). The span at 20 to 34 (RKDYVEEDGGSHSDS) shows a compositional bias: basic and acidic residues. The next 11 membrane-spanning stretches (helical) occupy residues 165–185 (AVLNGLNVLCGVGILSTPYAA), 190–210 (WLGLMILFVYGLLSFYTGILL), 237–257 (IFVSIVLYLELYACCVEYIIL), 283–303 (LFALLTTLAVLPTVWLRDLSV), 307–327 (ISAGGVIASVLVVLCLFWIGL), 342–362 (LSTLPVAIGLYGYCYSGHAVF), 377–397 (AVLLTCFGICTLMYAGVAVMG), 422–442 (IAVWTTVVNPFTKYALTISPV), 462–484 (IGIRTLLVFSTLLVGLAIPFFGL), 488–510 (LIGSLLTMLVTLILPPACFLSIV), and 521–541 (LCVLIIIVGAISSVIGSYSAL).

It belongs to the amino acid/polyamine transporter 2 family. Amino acid/auxin permease (AAAP) (TC 2.A.18.5) subfamily.

The protein localises to the membrane. The polypeptide is Amino acid transporter AVT1C (Arabidopsis thaliana (Mouse-ear cress)).